Reading from the N-terminus, the 902-residue chain is MKIAVIGQSLFGQEVYCHLRKEGHEVVGGFTVPDKDGKADPLGLEAEKDGVPVFKFSRWRAKGQALPDVVAKYQALGAELNVLPFCSQFIPMEIINAPQHGSIIYHPSLLPRHRGASAINWTLIHGDKKGGFSIFWADDGLDTGDLLLQKECEVLPDDTVSTLYNRFLFPEGIKGMVQAVRLIAEGKAPRLPQPEEGATYEGIQKKETAKINWDQPAEAIHNWIRGNDKVPGAWTEACEQKLTFFNSTLNTSGLVPEGDALPIPGAHRPGVVTKAGLILFGNDDKMLLVKNIQLEDGKMILASNFFKGAASSALELTEAELVTAEAVRSVWQRILPNVLEVEDSTDFFKSGAASVDVVRLVEEVKELCDGLELENEDVYMASTFGDFIQLLVRKLRGDDEEGECSIDYVEMAVNKRTIRIPHQLFIGGEFVDAEGAKTYETINPTDGSVICQVSLAQVTDVDKAVAAAKDAFENGRWGKISARDRGRLLYRLADLMEQHQEELATIEALDAGAVYTLALKTHVGMSIQTFRYFAGWCDKIQGSTIPINQARPNRNLTLTRKEPVGVCGIIIPWNYPLMMLSWKTAACLAAGNTVVIKPAQVTPLTALKFAELTLKAGIPKGVVNVLPGSGSLVGQRLSDHPDVRKIGFTGSTEVGKHIMKSCAISNVKKVSLELGGKSPLIIFADCDLNKAVQMGMSSVFFNKGENCIAAGRLFVEDSIHDEFVRRVVEEVRKMKVGDPLDRDTDHGPQNHHAHLMKLMEYCQRGVKEGATLVCGGNQVPRPGFFFEPTVFTDVEDHMFIAKEESFGPVMIISRFADGDVDTVLSRANATEFGLASGVFTRDINKALYVSDKLQAGTVFVNTYNKTDVAAPFGGFKQSGFGKDLGEAALNEYLRVKTVTFEY.

Residues 1-310 are hydrolase domain; that stretch reads MKIAVIGQSL…LASNFFKGAA (310 aa). S9 carries the post-translational modification Phosphoserine. Position 38 is an N6-succinyllysine (K38). 88–90 is a (6R)-10-formyltetrahydrofolate binding site; sequence QFI. H106 serves as the catalytic Proton donor. Residue D142 coordinates (6R)-10-formyltetrahydrofolate. Residues 318–395 enclose the Carrier domain; that stretch reads EAELVTAEAV…DFIQLLVRKL (78 aa). S354 is modified (O-(pantetheine 4'-phosphoryl)serine). The tract at residues 417–902 is aldehyde dehydrogenase domain; that stretch reads TIRIPHQLFI…LRVKTVTFEY (486 aa). NADP(+) contacts are provided by residues 571-573 and 597-600; these read IPW and KPAQ. Phosphoserine occurs at positions 629 and 631. NADP(+) is bound by residues 630–635 and 650–651; these read GSLVGQ and GS. K660 carries the N6-succinyllysine modification. The active-site Proton acceptor is the E673. NADP(+) is bound at residue 673–674; it reads EL. The active-site Proton donor is the C707. K757 contacts NADP(+). K767 carries the N6-succinyllysine modification. 804 to 806 serves as a coordination point for NADP(+); that stretch reads ESF. S825 bears the Phosphoserine mark. K882 bears the N6-acetyllysine mark.

In the N-terminal section; belongs to the GART family. The protein in the C-terminal section; belongs to the aldehyde dehydrogenase family. ALDH1L subfamily. As to quaternary structure, homotetramer. Phosphopantetheinylation at Ser-354 by AASDHPPT is required for the formyltetrahydrofolate dehydrogenase activity.

The protein resides in the cytoplasm. Its subcellular location is the cytosol. It carries out the reaction (6R)-10-formyltetrahydrofolate + NADP(+) + H2O = (6S)-5,6,7,8-tetrahydrofolate + CO2 + NADPH + H(+). In terms of biological role, cytosolic 10-formyltetrahydrofolate dehydrogenase that catalyzes the NADP(+)-dependent conversion of 10-formyltetrahydrofolate to tetrahydrofolate and carbon dioxide. May also have an NADP(+)-dependent aldehyde dehydrogenase activity towards formaldehyde, acetaldehyde, propionaldehyde, and benzaldehyde. In Pongo abelii (Sumatran orangutan), this protein is Cytosolic 10-formyltetrahydrofolate dehydrogenase.